The following is a 307-amino-acid chain: Ribosomal RNA small subunit methyltransferase H (307 aa).

S-adenosyl-L-methionine contacts are provided by residues 33-35, Asp52, Leu83, Asp97, and Gln104; that span reads GGH.

The protein belongs to the methyltransferase superfamily. RsmH family.

Its subcellular location is the cytoplasm. It catalyses the reaction cytidine(1402) in 16S rRNA + S-adenosyl-L-methionine = N(4)-methylcytidine(1402) in 16S rRNA + S-adenosyl-L-homocysteine + H(+). Its function is as follows. Specifically methylates the N4 position of cytidine in position 1402 (C1402) of 16S rRNA. In Campylobacter fetus subsp. fetus (strain 82-40), this protein is Ribosomal RNA small subunit methyltransferase H.